We begin with the raw amino-acid sequence, 310 residues long: Cell division protein FtsQ (310 aa).

The segment at 1 to 57 (MSEPENTAEDKDAEAAISADAVESETTADGGENPAEGESAEGPRMRARRERMERREA) is disordered. Over 1–95 (MSEPENTAED…AGRGKVQGLQ (95 aa)) the chain is Cytoplasmic. The helical transmembrane segment at 96-116 (TLLLVVLLALIAVGLGSILYF) threads the bilayer. Residues 117–310 (TPLMSVRQTV…VSSPDLPTVK (194 aa)) lie on the Extracellular side of the membrane. The region spanning 120 to 188 (MSVRQTVVTG…STLRVTIVER (69 aa)) is the POTRA domain.

Belongs to the FtsQ/DivIB family. FtsQ subfamily.

The protein localises to the cell membrane. Essential cell division protein. The polypeptide is Cell division protein FtsQ (Mycobacteroides abscessus (strain ATCC 19977 / DSM 44196 / CCUG 20993 / CIP 104536 / JCM 13569 / NCTC 13031 / TMC 1543 / L948) (Mycobacterium abscessus)).